A 78-amino-acid polypeptide reads, in one-letter code: MSRVCQVTGKRPVTGNNRSHAMNATKRRFLPNLHSHRFWVESEKRFVTLRVSAKGMRVIDKKGIETVLADLRTRGEKY.

It belongs to the bacterial ribosomal protein bL28 family.

The chain is Large ribosomal subunit protein bL28 from Erwinia tasmaniensis (strain DSM 17950 / CFBP 7177 / CIP 109463 / NCPPB 4357 / Et1/99).